Here is a 188-residue protein sequence, read N- to C-terminus: Phosphoribosylglycinamide formyltransferase (188 aa).

N(1)-(5-phospho-beta-D-ribosyl)glycinamide is bound at residue 12–14 (GSN). (6R)-10-formyltetrahydrofolate is bound by residues Lys-66, 91-94 (MRLV), and Asn-108. Catalysis depends on His-110, which acts as the Proton donor.

The protein belongs to the GART family.

The catalysed reaction is N(1)-(5-phospho-beta-D-ribosyl)glycinamide + (6R)-10-formyltetrahydrofolate = N(2)-formyl-N(1)-(5-phospho-beta-D-ribosyl)glycinamide + (6S)-5,6,7,8-tetrahydrofolate + H(+). It functions in the pathway purine metabolism; IMP biosynthesis via de novo pathway; N(2)-formyl-N(1)-(5-phospho-D-ribosyl)glycinamide from N(1)-(5-phospho-D-ribosyl)glycinamide (10-formyl THF route): step 1/1. Catalyzes the transfer of a formyl group from 10-formyltetrahydrofolate to 5-phospho-ribosyl-glycinamide (GAR), producing 5-phospho-ribosyl-N-formylglycinamide (FGAR) and tetrahydrofolate. The protein is Phosphoribosylglycinamide formyltransferase of Staphylococcus epidermidis (strain ATCC 35984 / DSM 28319 / BCRC 17069 / CCUG 31568 / BM 3577 / RP62A).